The chain runs to 2774 residues: Teneurin-2 (2774 aa).

The Teneurin N-terminal domain occupies 1–375; the sequence is MDVKDRRHRS…KPSKYCSWKC (375 aa). Over 1–379 the chain is Cytoplasmic; sequence MDVKDRRHRS…YCSWKCAALS (379 aa). A phosphoserine mark is found at S90 and S124. The segment at 111-271 is disordered; the sequence is TGSDADSDTE…HHHSSANSLN (161 aa). Positions 141–155 are enriched in polar residues; sequence SSGLSSRENSALTLT. T155 carries the phosphothreonine modification. S157 is modified (phosphoserine). Over residues 159–168 the composition is skewed to basic and acidic residues; it reads NENKSDDENG. The segment covering 176–188 has biased composition (low complexity); the sequence is SPSLLPSAQLPSS. Residues 202–211 are compositionally biased toward polar residues; the sequence is DSNTSHQIMD. The segment covering 229–240 has biased composition (low complexity); the sequence is SGPQQASSSGPP. The helical transmembrane segment at 380–400 threads the bilayer; sequence AIAAALLLAILLAYFIAMHLL. The Extracellular segment spans residues 401-2774; sequence GLNWQLQPAD…FLRQNEMGKR (2374 aa). N-linked (GlcNAc...) asparagine glycosylation is found at N443 and N482. 8 consecutive EGF-like domains span residues 575-603, 598-634, 636-668, 669-701, 702-735, 738-766, 769-797, and 808-841; these read DCPR…ADCA, LGAD…AECD, PMNQ…EHCE, EVDC…NCEL, ARVQ…PDCS, VCSV…AACD, VCHP…EHCT, and DGCP…PGCN. 22 cysteine pairs are disulfide-bonded: C576/C586, C580/C591, C593/C602, C611/C622, C624/C633, C640/C651, C645/C656, C658/C667, C672/C683, C677/C688, C690/C699, C710/C723, C725/C734, C739/C749, C743/C754, C756/C765, C770/C780, C774/C785, C787/C796, C810/C820, C814/C829, and C831/C840. N-linked (GlcNAc...) asparagine glycosylation is found at N925, N948, and N1267. NHL repeat units lie at residues 1272–1316, 1342–1386, 1401–1452, 1474–1501, and 1530–1573; these read LELR…VKSL, ARCG…NGII, LSCD…IAGR, LESA…INRL, and CYSG…VSKN. One copy of the YD 1 repeat lies at 1583-1602; that stretch reads YEAASPGEQELYVFNADGIH. A glycan (N-linked (GlcNAc...) asparagine) is linked at N1616. YD repeat units follow at residues 1619–1639, 1682–1701, and 1702–1724; these read YSTD…LKIR, YDGN…WTTF, and YDYD…TSLH. 5 N-linked (GlcNAc...) asparagine glycosylation sites follow: N1712, N1749, N1773, N1807, and N1892. YD repeat units follow at residues 1895-1914, 1936-1954, 1955-1975, 1982-1999, 2000-2021, 2022-2039, 2042-2062, 2065-2085, 2093-2113, 2119-2136, 2137-2163, 2165-2178, 2179-2202, 2205-2225, 2226-2246, 2248-2268, 2280-2300, and 2302-2322; these read YFFN…ERTD, YLDK…YIFE, YDSS…HSMS, YIRN…VIFD, YSDD…VFYK, YGKL…TAVT, YDET…FSCT, YRKI…EGMV, YHDN…TPLP, YDEI…GVIY, YDIN…IKEV, YEMF…MTVQ, YDSM…TKYT, YDGD…WRYS, YDLN…LMPL, YDLR…DDDG, YNSK…SVQY, and YDGV…LQYF. N1993 is a glycosylation site (N-linked (GlcNAc...) asparagine). Residue N2197 is glycosylated (N-linked (GlcNAc...) asparagine). The N-linked (GlcNAc...) asparagine glycan is linked to N2337. Residues 2348 to 2389 form a YD 23 repeat; that stretch reads YDLQGHLFAMESSSGEEYYVASDNTGTPLAVFSINGLMIKQL. N2648 carries an N-linked (GlcNAc...) asparagine glycan.

The protein belongs to the tenascin family. Teneurin subfamily. As to quaternary structure, homodimer; disulfide-linked. Heterodimer with either TENM1 or TENM3. May also form heterodimer with TENM4. Isoform 2 (C-terminal globular domain) interacts with ADGRL1 isoform 2. Post-translationally, derives from the membrane form by proteolytic processing. In terms of processing, derives from the plasma membrane form by proteolytic cleavage and translocates to the nucleus. Homophilic binding of the C-terminal extracellular domain stimulates its proteolytic cleavage and release in the cytoplasmic. Is subjected to rapid degradation by the proteasome pathway. In terms of tissue distribution, highly expressed in heart, followed by brain, liver, kidney and fetal brain and weakly expressed in lung and testis. No expression was detected in skeletal muscle, pancreas, spleen, ovary and fetal liver.

Its subcellular location is the cell membrane. It localises to the presynaptic cell membrane. The protein localises to the postsynaptic cell membrane. The protein resides in the endoplasmic reticulum. It is found in the golgi apparatus. Its subcellular location is the synapse. It localises to the cell projection. The protein localises to the dendritic spine. The protein resides in the filopodium. It is found in the growth cone. Its subcellular location is the nucleus. It localises to the PML body. In terms of biological role, involved in neural development, regulating the establishment of proper connectivity within the nervous system. Acts as a ligand of the ADGRL1 and ADGRL3 receptors that are expressed at the surface of adjacent cells. Promotes the formation of filopodia and enlarged growth cone in neuronal cells. Mediates axon guidance and homophilic and heterophilic cell-cell adhesion. May function as a cellular signal transducer. Acts as a ligand of the ADGRL1 receptor. Mediates axon guidance and heterophilic cell-cell adhesion. Its function is as follows. Induces gene transcription inhibition. The polypeptide is Teneurin-2 (TENM2) (Homo sapiens (Human)).